Reading from the N-terminus, the 439-residue chain is Ectonucleotide pyrophosphatase/phosphodiesterase family member 7 (439 aa).

The N-terminal stretch at 1–21 (MGHSAVLLSVALVILPACVTG) is a signal peptide. Residues 22-422 (GPVQRQQQHK…RSGSPLSRQH (401 aa)) lie on the Extracellular side of the membrane. Zn(2+) contacts are provided by aspartate 38 and threonine 74. The tract at residues 71-77 (VTMTSPC) is required for enzyme activity. The active-site Nucleophile is the threonine 74. Asparagine 95 provides a ligand contact to substrate. Asparagine 99, asparagine 120, asparagine 145, and asparagine 167 each carry an N-linked (GlcNAc...) asparagine glycan. The Zn(2+) site is built by aspartate 198, histidine 202, aspartate 245, and histidine 246. An N-linked (GlcNAc...) asparagine glycan is attached at asparagine 266. A Zn(2+)-binding site is contributed by histidine 352. The helical transmembrane segment at 423–439 (HLVVVLMGILTGLAKVV) threads the bilayer.

Belongs to the nucleotide pyrophosphatase/phosphodiesterase family. Zn(2+) serves as cofactor. In terms of processing, N-glycosylated; required for activity and transport to the plasma membrane. In terms of tissue distribution, detected in small intestine (at protein level). Highly expressed in the jejunum.

The protein resides in the cell membrane. It carries out the reaction a sphingomyelin + H2O = phosphocholine + an N-acylsphing-4-enine + H(+). The enzyme catalyses a 1-O-alkyl-2-acetyl-sn-glycero-3-phosphocholine + H2O = a 1-O-alkyl-2-acetyl-sn-glycerol + phosphocholine + H(+). It catalyses the reaction 1-O-octadecyl-2-acetyl-sn-glycero-3-phosphocholine + H2O = 1-O-octadecyl-2-acetyl-sn-glycerol + phosphocholine + H(+). The catalysed reaction is 1-hexadecanoyl-sn-glycero-3-phosphocholine + H2O = 1-hexadecanoyl-sn-glycerol + phosphocholine + H(+). Platelet-activating factor hydrolysis is inhibited by higher amount of sphingomyelin. The hydrolysis of platelet-activating factor and sphingomyelin can be inhibited by the presence of sphingomyelin and platelet-activating factor respectively, the inhibition of platelet-activating factor hydrolysis by sphingomyelin being stronger. PAF hydrolysis is dose-dependently increased by both taurocholate (TC) and taurodeoxycholate (TDC). Hydrolase activity against PAF is inhibited by EDTA and stimulated by 0.1-0.25 mM Zn2+. Functionally, choline-specific phosphodiesterase that hydrolyzes sphingomyelin (SM) releasing the ceramide and phosphocholine and therefore is involved in sphingomyelin digestion, ceramide formation, and fatty acid (FA) absorption in the gastrointestinal tract. Also has phospholipase C activity and can also cleave phosphocholine from palmitoyl lyso-phosphatidylcholine and platelet-activating factor (PAF) leading to its inactivation. Does not have nucleotide pyrophosphatase activity. May promote cholesterol absorption by affecting the levels of sphingomyelin derived from either diet or endogenous sources, in the intestinal lumen. This Rattus norvegicus (Rat) protein is Ectonucleotide pyrophosphatase/phosphodiesterase family member 7.